A 349-amino-acid polypeptide reads, in one-letter code: Glucose 1-dehydrogenase 1 (349 aa).

Cysteine 39 lines the Zn(2+) pocket. Threonine 41 lines the substrate pocket. Zn(2+) is bound by residues histidine 64 and glutamate 65. Positions 110 and 146 each coordinate substrate. Glutamate 146 lines the Zn(2+) pocket. Residues 178–181 (AGPI), 260–262 (LGV), and 289–291 (SVN) each bind NADP(+). Asparagine 291 contacts substrate.

The protein belongs to the zinc-containing alcohol dehydrogenase family. Glucose 1-dehydrogenase subfamily. Zn(2+) is required as a cofactor.

It carries out the reaction D-glucose + NAD(+) = D-glucono-1,5-lactone + NADH + H(+). The catalysed reaction is D-glucose + NADP(+) = D-glucono-1,5-lactone + NADPH + H(+). In terms of biological role, catalyzes the NAD(P)(+)-dependent oxidation of D-glucose to D-gluconate via gluconolactone. Can utilize both NAD(+) and NADP(+) as electron acceptor. Is involved in the degradation of glucose through a non-phosphorylative variant of the Entner-Doudoroff pathway. In Caldivirga maquilingensis (strain ATCC 700844 / DSM 13496 / JCM 10307 / IC-167), this protein is Glucose 1-dehydrogenase 1.